Reading from the N-terminus, the 262-residue chain is Phosphatidylglycerol--prolipoprotein diacylglyceryl transferase (262 aa).

Transmembrane regions (helical) follow at residues 9–29 (LGPLAIRWYALCIVTGLILAV), 41–61 (IIPDDILDFILVAFPLAILGA), 80–100 (IFAIWNGGLAIYGGLITGALV), and 109–129 (LINTWDFLDIAAPSVMIAQSL). Residue Arg-131 coordinates a 1,2-diacyl-sn-glycero-3-phospho-(1'-sn-glycerol). The next 3 helical transmembrane spans lie at 167–187 (QPTFLYESLWNLLGFALILIF), 197–217 (GHITAFYLIWYGFGRMVIEGM), and 226–246 (GLRVSQWLSVVFIGLGIMIVI).

Belongs to the Lgt family.

It is found in the cell membrane. The enzyme catalyses L-cysteinyl-[prolipoprotein] + a 1,2-diacyl-sn-glycero-3-phospho-(1'-sn-glycerol) = an S-1,2-diacyl-sn-glyceryl-L-cysteinyl-[prolipoprotein] + sn-glycerol 1-phosphate + H(+). It functions in the pathway protein modification; lipoprotein biosynthesis (diacylglyceryl transfer). Its function is as follows. Catalyzes the transfer of the diacylglyceryl group from phosphatidylglycerol to the sulfhydryl group of the N-terminal cysteine of a prolipoprotein, the first step in the formation of mature lipoproteins. The sequence is that of Phosphatidylglycerol--prolipoprotein diacylglyceryl transferase from Streptococcus pneumoniae (strain ATCC 700669 / Spain 23F-1).